The following is a 92-amino-acid chain: Small ribosomal subunit protein uS19 (92 aa).

Belongs to the universal ribosomal protein uS19 family.

Protein S19 forms a complex with S13 that binds strongly to the 16S ribosomal RNA. The polypeptide is Small ribosomal subunit protein uS19 (Corynebacterium aurimucosum (strain ATCC 700975 / DSM 44827 / CIP 107346 / CN-1) (Corynebacterium nigricans)).